Consider the following 258-residue polypeptide: Imidazole glycerol phosphate synthase subunit HisF (258 aa).

Active-site residues include Asp11 and Asp130.

It belongs to the HisA/HisF family. In terms of assembly, heterodimer of HisH and HisF.

It localises to the cytoplasm. It carries out the reaction 5-[(5-phospho-1-deoxy-D-ribulos-1-ylimino)methylamino]-1-(5-phospho-beta-D-ribosyl)imidazole-4-carboxamide + L-glutamine = D-erythro-1-(imidazol-4-yl)glycerol 3-phosphate + 5-amino-1-(5-phospho-beta-D-ribosyl)imidazole-4-carboxamide + L-glutamate + H(+). It participates in amino-acid biosynthesis; L-histidine biosynthesis; L-histidine from 5-phospho-alpha-D-ribose 1-diphosphate: step 5/9. IGPS catalyzes the conversion of PRFAR and glutamine to IGP, AICAR and glutamate. The HisF subunit catalyzes the cyclization activity that produces IGP and AICAR from PRFAR using the ammonia provided by the HisH subunit. The polypeptide is Imidazole glycerol phosphate synthase subunit HisF (Azorhizobium caulinodans (strain ATCC 43989 / DSM 5975 / JCM 20966 / LMG 6465 / NBRC 14845 / NCIMB 13405 / ORS 571)).